The following is a 1269-amino-acid chain: MELEQMVVKELGISMDDLRELIDRELEKIEFVKQRKAQLLEMEQLVKQKEAEVDHVDKLFDNATRAVDDCETLVKSLYDQIGMTYKESSSEDEGSSKPTEVIEIPDEDDDDVMSVGSGEAVSKIPKEKHLLREAMAAMKRSRQDVQSIVEAIQKKSDGPQTRFSSHPSSPTSSVGGSNQASASNDMSKDGDLVVGMRILGKKRTKTWHKGTLISIQCVGTGKKFKVKFDNKGKSLLSGNHIAYDYHPPPENLTVGSRVVAKYKDGNQVWLYAGIVAEPPSSKNKMRYLIFFDDGYASYVTHAELYPVCRPWSKSWEDIEDVSCRDFIQEYVNAYPNRPMVLLKSGQLIKTEWEGTWWKSKVEEVDGSLVKILFLDDKRCEWIYRGSTRLEPMFSMKTSNASTQEKQQAGQQRTRPNVGAIRSKGPVVQFTHDLTGNEPEHNPAAPPSPQSMPSPQLIDTDSDSQQAQSKKQVAKKSTSFRPGSAGSGQSSPIPTESVPQPPAAPRPFQSNQSVQPVQSIQPIQPIHNIQTIQTIQGIQTIQAIQPIQSIQTLQPIQTIQPLQTIQTLQGNRIVTSIQQFQIIRTENIPAESTYKAPKEKLFYLPHVCNYTCLSRIRPLSHRGKNPLLVPLLYDFRRMTARRRVNRKMGFHVIYKSPCGLSLRTMPEIERYLFETQCKMLFLEMFCLDPYVLVDRKFQPQKPFYYIPDITYGKEDVMLSCVNEIDRTPPPQVAYSKERIPGKGVFINTGADYLVGCDCTDGCRDKSKCACHQLTIQATACTPGAQSNPMAGYQHKRLEECLPTGVYECNKRCKCSANMCNNRLVQHGLQVRLQLFKTQNKGWGIRGLDDIAKGSFVCIYAGKILTDDFADKEGLEMGDEYFANLDHIESVENFKEGYESDAKSSSDSSGVDLKEDHEENSGSEDQEESNDSSDDNFGKNEDITTSSVWRSYATRRTTRGQKENGTSETASKDSRTRDETTDCKLPEETSKNKVASWLSSNTMADSVMDSDSRSSLKMGEALETDKPKESEEASKYPRFAEGNRAYGYNPTPTKKDGVRRPVTKTALHQIKRQSSSAQPTEEVLTLSSSSDSEVGSGTNGSKKPAAQATANDSDDIQTISSGSDEEEEKKNVAASAGPVKRQVAVKSTRGFALKSTHGITVKSNMASGEGGPGRRNTRQFFDGEESCYIIDAKLEGNLGRYLNHSCSPNLFVQNVFVDTHDLRFPWVAFFASKRIRAGTELTWDYNYEVGSVEGKKLLCCCGSTECRGRLL.

A coiled-coil region spans residues 9-63; sequence KELGISMDDLRELIDRELEKIEFVKQRKAQLLEMEQLVKQKEAEVDHVDKLFDNA. Disordered stretches follow at residues 85-121 and 153-188; these read YKESSSEDEGSSKPTEVIEIPDEDDDDVMSVGSGEAV and QKKSDGPQTRFSSHPSSPTSSVGGSNQASASNDMSK. The segment covering 103 to 112 has biased composition (acidic residues); sequence EIPDEDDDDV. A compositionally biased stretch (low complexity) spans 164–177; sequence SSHPSSPTSSVGGS. 2 Tudor domains span residues 250 to 312 and 340 to 395; these read ENLT…RPWS and VLLK…MFSM. A compositionally biased stretch (polar residues) spans 396 to 414; sequence KTSNASTQEKQQAGQQRTR. Residues 396 to 516 are disordered; that stretch reads KTSNASTQEK…FQSNQSVQPV (121 aa). The span at 462–476 shows a compositional bias: low complexity; the sequence is DSQQAQSKKQVAKKS. A compositionally biased stretch (polar residues) spans 486-497; sequence SGQSSPIPTESV. Residues 620 to 691 enclose the MBD domain; that stretch reads HRGKNPLLVP…EMFCLDPYVL (72 aa). Positions 753-826 constitute a Pre-SET domain; that stretch reads VGCDCTDGCR…MCNNRLVQHG (74 aa). Residues C755, C757, C761, C767, C769, C807, C811, C813, and C818 each coordinate Zn(2+). The 416-residue stretch at 829–1244 folds into the SET domain; that stretch reads VRLQLFKTQN…AGTELTWDYN (416 aa). S-adenosyl-L-methionine is bound by residues 839–841, D877, and Y879; that span reads KGW. Residues 894 to 1139 form a disordered region; sequence EGYESDAKSS…VAASAGPVKR (246 aa). Over residues 919–932 the composition is skewed to acidic residues; it reads SGSEDQEESNDSSD. Basic and acidic residues-rich tracts occupy residues 968–989 and 1021–1033; these read ASKDSRTRDETTDCKLPEETSK and ETDKPKESEEASK. Residues 1078 to 1094 are compositionally biased toward low complexity; that stretch reads TEEVLTLSSSSDSEVGS. Polar residues predominate over residues 1106–1120; sequence ATANDSDDIQTISSG. S-adenosyl-L-methionine contacts are provided by residues R1198 and 1201 to 1202; that span reads NH. The Zn(2+) site is built by C1204, C1257, C1259, and C1264. The region spanning 1253–1269 is the Post-SET domain; it reads KKLLCCCGSTECRGRLL.

Belongs to the class V-like SAM-binding methyltransferase superfamily. Histone-lysine methyltransferase family. Suvar3-9 subfamily.

Its subcellular location is the nucleus. It localises to the chromosome. It catalyses the reaction N(6),N(6)-dimethyl-L-lysyl(9)-[histone H3] + S-adenosyl-L-methionine = N(6),N(6),N(6)-trimethyl-L-lysyl(9)-[histone H3] + S-adenosyl-L-homocysteine + H(+). Histone methyltransferase that specifically trimethylates 'Lys-9' of histone H3. H3 'Lys-9' trimethylation represents a specific tag for epigenetic transcriptional repression by recruiting HP1 (CBX1, CBX3 and/or CBX5) proteins to methylated histones. Mainly functions in euchromatin regions, thereby playing a central role in the silencing of euchromatic genes. H3 'Lys-9' trimethylation is coordinated with DNA methylation. Plays a role in promoter hypermethylation and transcriptional silencing of tumor suppressor genes (TSGs) or other tumor-related genes. Also required to maintain a transcriptionally repressive state of genes in undifferentiated embryonic stem cells (ESCs). Associates at promoter regions of tumor suppressor genes (TSGs) leading to their gene silencing. This is Histone-lysine N-methyltransferase SETDB1 (setdb1) from Xenopus laevis (African clawed frog).